The primary structure comprises 152 residues: 3-hydroxyacyl-[acyl-carrier-protein] dehydratase FabZ (152 aa).

Residue His58 is part of the active site.

The protein belongs to the thioester dehydratase family. FabZ subfamily.

It is found in the cytoplasm. It catalyses the reaction a (3R)-hydroxyacyl-[ACP] = a (2E)-enoyl-[ACP] + H2O. Its function is as follows. Involved in unsaturated fatty acids biosynthesis. Catalyzes the dehydration of short chain beta-hydroxyacyl-ACPs and long chain saturated and unsaturated beta-hydroxyacyl-ACPs. This is 3-hydroxyacyl-[acyl-carrier-protein] dehydratase FabZ from Prochlorococcus marinus subsp. pastoris (strain CCMP1986 / NIES-2087 / MED4).